We begin with the raw amino-acid sequence, 468 residues long: Proline--tRNA ligase (468 aa).

The protein belongs to the class-II aminoacyl-tRNA synthetase family. ProS type 3 subfamily. In terms of assembly, homodimer.

It localises to the cytoplasm. It catalyses the reaction tRNA(Pro) + L-proline + ATP = L-prolyl-tRNA(Pro) + AMP + diphosphate. Functionally, catalyzes the attachment of proline to tRNA(Pro) in a two-step reaction: proline is first activated by ATP to form Pro-AMP and then transferred to the acceptor end of tRNA(Pro). This chain is Proline--tRNA ligase, found in Frankia alni (strain DSM 45986 / CECT 9034 / ACN14a).